Consider the following 582-residue polypeptide: Aspartate--tRNA ligase (582 aa).

Glutamate 174 provides a ligand contact to L-aspartate. An aspartate region spans residues 198 to 201 (QITK). An L-aspartate-binding site is contributed by arginine 220. ATP contacts are provided by residues 220-222 (RDE) and glutamine 229. Residue histidine 443 coordinates L-aspartate. Glutamate 477 serves as a coordination point for ATP. Residue arginine 484 participates in L-aspartate binding. An ATP-binding site is contributed by 529–532 (GLDR).

The protein belongs to the class-II aminoacyl-tRNA synthetase family. Type 1 subfamily. As to quaternary structure, homodimer.

The protein resides in the cytoplasm. It catalyses the reaction tRNA(Asp) + L-aspartate + ATP = L-aspartyl-tRNA(Asp) + AMP + diphosphate. Its function is as follows. Catalyzes the attachment of L-aspartate to tRNA(Asp) in a two-step reaction: L-aspartate is first activated by ATP to form Asp-AMP and then transferred to the acceptor end of tRNA(Asp). The chain is Aspartate--tRNA ligase from Streptococcus pyogenes serotype M5 (strain Manfredo).